We begin with the raw amino-acid sequence, 627 residues long: Carnitine O-acetyltransferase, mitochondrial (627 aa).

The active-site Proton acceptor is the histidine 336. CoA-binding positions include lysine 418 and 422–429 (KKFKVSPD). (R)-carnitine contacts are provided by tyrosine 451, serine 453, and threonine 464. A CoA-binding site is contributed by glutamine 553. A Microbody targeting signal motif is present at residues 625-627 (PKL).

The protein belongs to the carnitine/choline acetyltransferase family.

The protein localises to the peroxisome. It localises to the mitochondrion inner membrane. The enzyme catalyses (R)-carnitine + acetyl-CoA = O-acetyl-(R)-carnitine + CoA. In terms of biological role, carnitine acetylase is specific for short chain fatty acids. Carnitine acetylase seems to affect the flux through the pyruvate dehydrogenase complex. It may be involved as well in the transport of acetyl-CoA into mitochondria. The polypeptide is Carnitine O-acetyltransferase, mitochondrial (CAT2) (Candida tropicalis (Yeast)).